Consider the following 259-residue polypeptide: Dihydroorotate dehydrogenase B (NAD(+)), electron transfer subunit (259 aa).

Residues 2–102 (MQKQNMIVVN…LGPLGHGFPV (101 aa)) enclose the FAD-binding FR-type domain. FAD-binding positions include 53 to 56 (RPIS), 70 to 72 (LYR), and 77 to 78 (GT). Positions 221, 226, 229, and 246 each coordinate [2Fe-2S] cluster.

It belongs to the PyrK family. In terms of assembly, heterotetramer of 2 PyrK and 2 PyrD type B subunits. It depends on [2Fe-2S] cluster as a cofactor. Requires FAD as cofactor.

It functions in the pathway pyrimidine metabolism; UMP biosynthesis via de novo pathway; orotate from (S)-dihydroorotate (NAD(+) route): step 1/1. Functionally, responsible for channeling the electrons from the oxidation of dihydroorotate from the FMN redox center in the PyrD type B subunit to the ultimate electron acceptor NAD(+). The polypeptide is Dihydroorotate dehydrogenase B (NAD(+)), electron transfer subunit (Bacillus mycoides (strain KBAB4) (Bacillus weihenstephanensis)).